A 309-amino-acid polypeptide reads, in one-letter code: Taste receptor type 2 member 43 (309 aa).

Met-1 is a topological domain (extracellular). The helical transmembrane segment at 2–22 (ITFLPIIFSSLVVVTFVIGNF) threads the bilayer. The Cytoplasmic portion of the chain corresponds to 23 to 46 (ANGFIALVNSIEWFKRQKISFADQ). A helical transmembrane segment spans residues 47–67 (ILTALAVSRVGLLWVLLLNWY). The Extracellular portion of the chain corresponds to 68–86 (STVLNPAFNSVEVRTTAYN). The chain crosses the membrane as a helical span at residues 87–107 (IWAVINHFSNWLATSLSIFYL). Topologically, residues 108-126 (LKIANFSNFIFLHLKRRVK) are cytoplasmic. A helical transmembrane segment spans residues 127–147 (SVILVMLLGPLLFLACHLFVI). Residues 148-178 (NMNEIVRTKEFEGNMTWKIKLKSAMYFSNMT) lie on the Extracellular side of the membrane. Residues Asn-161 and Asn-176 are each glycosylated (N-linked (GlcNAc...) asparagine). A helical membrane pass occupies residues 179 to 199 (VTMVANLVPFTLTLLSFLLLI). The Cytoplasmic segment spans residues 200 to 229 (CSLCKHLKKMQLHGKGSQDPSTKVHIKVLQ). Residues 230–250 (TVISFLLLCAIYFLSIMISVW) form a helical membrane-spanning segment. The Extracellular portion of the chain corresponds to 251–259 (SFGSLKNKP). The chain crosses the membrane as a helical span at residues 260-280 (VFMFCKAMRFSYPSIHPFILI). At 281–309 (WGNKKLKQTFLSVFWQMRYWVKGEKTSSP) the chain is on the cytoplasmic side.

This sequence belongs to the G-protein coupled receptor T2R family.

It is found in the membrane. It localises to the cell projection. Its subcellular location is the cilium membrane. In terms of biological role, gustducin-coupled receptor immplicated in the perception of bitter compounds in the oral cavity and the gastrointestinal tract. Signals through PLCB2 and the calcium-regulated cation channel TRPM5. Activated by the sulfonyl amide sweeteners saccharin and acesulfame K. In airway epithelial cells, binding of bitter compounds increases the intracellular calcium ion concentration and stimulates ciliary beat frequency. May act as chemosensory receptors in airway epithelial cells to detect and eliminate potential noxious agents from the airways. This Pan troglodytes (Chimpanzee) protein is Taste receptor type 2 member 43 (TAS2R43).